A 298-amino-acid polypeptide reads, in one-letter code: DDRGK domain-containing protein 1 (298 aa).

Residues 1–21 (MDIVLYFVAVPILIVLIVSAV) form a helical membrane-spanning segment. Topologically, residues 22–298 (KVRGKTEEDN…NLIPEIHNTA (277 aa)) are cytoplasmic. A disordered region spans residues 71–149 (NSAYREAADN…EERRKEDKKE (79 aa)). A compositionally biased stretch (acidic residues) spans 82 to 94 (SPVEVEEEYEEAE). Over residues 110–149 (KLEEKQAKRAQREAELEEREERKRTQELREEERRKEDKKE) the composition is skewed to basic and acidic residues. Positions 181–195 (SFVVEEQGEADELTE) match the UFM1-interacting motif (UFIM) motif. The region spanning 215–259 (VLLEDLASHFGLRTQDAISRLQDLLSDGSITGVIDDRGKFIFITP) is the PCI domain.

The protein belongs to the DDRGK1 family. In terms of assembly, component of the UFM1 ribosome E3 ligase (UREL) complex, composed of ufl1, ddrgk1 and cdk5rap3.

It is found in the endoplasmic reticulum membrane. Component of the UFM1 ribosome E3 ligase (UREL) complex, a multiprotein complex that catalyzes ufmylation of endoplasmic reticulum-docked proteins. The UREL complex plays a key role in ribosome recycling by mediating mono-ufmylation of the RPL26/uL24 subunit of the 60S ribosome following ribosome dissociation: ufmylation weakens the junction between post-termination 60S subunits and SEC61 translocons, promoting release and recycling of the large ribosomal subunit from the endoplasmic reticulum membrane. Ufmylation of RPL26/uL24 and subsequent 60S ribosome recycling either take place after normal termination of translation or after ribosome stalling during cotranslational translocation at the endoplasmic reticulum. Within the UREL complex, DDRGK1 tethers the complex to the endoplasmic reticulum membrane to restrict its activity to endoplasmic reticulum-docked ribosomes and acts as an ufmylation 'reader': following RPL26/uL24 ufmylation, DDRGK1 specifically binds to ufmylated RPL26/uL24 via its UFIM motif, resulting in stable association between the 60S ribosome and the UREL complex, followed by dissociation of the 60S ribosome subunit from the endoplasmic reticulum membrane. The UREL complex is also involved in reticulophagy in response to endoplasmic reticulum stress by promoting ufmylation of proteins such as CYB5R3 and RPN1, thereby promoting lysosomal degradation of ufmylated proteins. Required for stabilization and ufmylation of ATG9A. This Osmerus mordax (Rainbow smelt) protein is DDRGK domain-containing protein 1.